The chain runs to 310 residues: Putative carboxypeptidase SCO6489 (310 aa).

Catalysis depends on serine 116, which acts as the Nucleophile. Residues glutamate 212 and histidine 277 each act as charge relay system in the active site.

The protein belongs to the peptidase S66 family.

This Streptomyces coelicolor (strain ATCC BAA-471 / A3(2) / M145) protein is Putative carboxypeptidase SCO6489.